We begin with the raw amino-acid sequence, 83 residues long: Mu-theraphotoxin-Hhn2k (83 aa).

Positions 1-21 (MKASMFLALAGLVLLFVVDYA) are cleaved as a signal peptide. Residues 22 to 48 (SESEEKEFPIELLSKIFAVDVFKGEER) constitute a propeptide that is removed on maturation. Intrachain disulfides connect Cys50/Cys65, Cys57/Cys70, and Cys64/Cys77. At Leu81 the chain carries Leucine amide.

Belongs to the neurotoxin 10 (Hwtx-1) family. 15 (Hntx-3) subfamily. In terms of assembly, monomer. Expressed by the venom gland.

The protein resides in the secreted. Lethal neurotoxin. Selectively blocks tetrodotoxin-sensitive voltage-gated sodium channels (Nav). Does not affect tetrodotoxin-resistant voltage-gated sodium channels or calcium channels. The protein is Mu-theraphotoxin-Hhn2k of Cyriopagopus hainanus (Chinese bird spider).